Here is a 378-residue protein sequence, read N- to C-terminus: Deoxyguanosinetriphosphate triphosphohydrolase-like protein (378 aa).

Positions 1 to 28 (MLAPYACQPGESRGRQQPESMSTFRSPF) are disordered. The segment covering 15–26 (RQQPESMSTFRS) has biased composition (polar residues). The 137-residue stretch at 62–198 (RLTHSIEVAQ…AAIADDVAYS (137 aa)) folds into the HD domain.

It belongs to the dGTPase family. Type 2 subfamily.

The sequence is that of Deoxyguanosinetriphosphate triphosphohydrolase-like protein from Cereibacter sphaeroides (strain ATCC 17025 / ATH 2.4.3) (Rhodobacter sphaeroides).